Reading from the N-terminus, the 494-residue chain is Acetyl-coenzyme A carboxylase carboxyl transferase subunit beta, chloroplastic (494 aa).

The 269-residue stretch at 226–494 (LWVQCENCYG…VPLNQNETEH (269 aa)) folds into the CoA carboxyltransferase N-terminal domain. Zn(2+) is bound by residues Cys-230, Cys-233, Cys-249, and Cys-252. The C4-type zinc finger occupies 230 to 252 (CENCYGLNYKKFLKSKMNICEQC).

The protein belongs to the AccD/PCCB family. In terms of assembly, acetyl-CoA carboxylase is a heterohexamer composed of biotin carboxyl carrier protein, biotin carboxylase and 2 subunits each of ACCase subunit alpha and ACCase plastid-coded subunit beta (accD). Requires Zn(2+) as cofactor.

It is found in the plastid. The protein localises to the chloroplast stroma. The enzyme catalyses N(6)-carboxybiotinyl-L-lysyl-[protein] + acetyl-CoA = N(6)-biotinyl-L-lysyl-[protein] + malonyl-CoA. It participates in lipid metabolism; malonyl-CoA biosynthesis; malonyl-CoA from acetyl-CoA: step 1/1. Component of the acetyl coenzyme A carboxylase (ACC) complex. Biotin carboxylase (BC) catalyzes the carboxylation of biotin on its carrier protein (BCCP) and then the CO(2) group is transferred by the transcarboxylase to acetyl-CoA to form malonyl-CoA. This is Acetyl-coenzyme A carboxylase carboxyl transferase subunit beta, chloroplastic from Coffea arabica (Arabian coffee).